The chain runs to 219 residues: Chalcone--flavanone isomerase (219 aa).

Thr-50, Asn-115, and Ser-192 together coordinate substrate.

The protein belongs to the chalcone isomerase family.

The enzyme catalyses a chalcone = a flavanone.. Its pathway is secondary metabolite biosynthesis; flavonoid biosynthesis. Functionally, catalyzes the intramolecular cyclization of bicyclic chalcones into tricyclic (S)-flavanones. Responsible for the isomerization of 4,2',4',6'-tetrahydroxychalcone (also termed chalcone) into naringenin. This Pyrus communis (Pear) protein is Chalcone--flavanone isomerase (CHI).